The sequence spans 261 residues: MNYKQSSPEVLRQLIRDGELVGHTSGMAEGYIQANVVILPSKYAYDFLKFCFRNPKTCPLLDVSEVGAHSFPYYGPYADIRTDVPKYRIYEHGQLIKEVDDITDLYTEDMVSFLIGCSFTFEHALLEAGLPVRHIEEGHNVPMYRTNIPAESSGYFKGNITVSMRPMTMTQAIKATEITSHFKNVHGTPIHIGTPEELGITDIDKPDYGEAVTIKPNEMPVFWGCGVTPQSVALDAKPELMITHSPGHMFITDIKDSELND.

The protein belongs to the D-glutamate cyclase family.

This is Putative hydro-lyase SH0274 from Staphylococcus haemolyticus (strain JCSC1435).